Consider the following 78-residue polypeptide: Small ribosomal subunit protein uS17 (78 aa).

It belongs to the universal ribosomal protein uS17 family. In terms of assembly, part of the 30S ribosomal subunit.

In terms of biological role, one of the primary rRNA binding proteins, it binds specifically to the 5'-end of 16S ribosomal RNA. The protein is Small ribosomal subunit protein uS17 of Maricaulis maris (strain MCS10) (Caulobacter maris).